An 89-amino-acid polypeptide reads, in one-letter code: N.vectensis toxin 7 (89 aa).

An N-terminal signal peptide occupies residues 1–21 (MASFFKIAVICLVMLVVCSNA). Intrachain disulfides connect C44–C77, C46–C69, and C62–C78.

Expressed in ectodermal gland cells.

In terms of biological role, probable toxin. The chain is N.vectensis toxin 7 from Nematostella vectensis (Starlet sea anemone).